Consider the following 228-residue polypeptide: MKYLSIFLLATFALAGDAPISTDSKGSPSLIAKFEKTSKSNIEGTIKFTPANNGTVSVSVDLKGLPSDIGPFPYHVHEKPVPASKNCSATENHFNPYNGTVRAATPAAHEVGDLAGKHGNIMGESYKTEYDDSYISLNEKSRSYIGGLSIVIHANNGTRLNCANITLLDEGHGNANTTMSNSSSSSSQSAVNTSSSMASTAPQGNGAERAVVNGLLAAGVVGVIAALI.

Positions 1-15 (MKYLSIFLLATFALA) are cleaved as a signal peptide. Residue N53 is glycosylated (N-linked (GlcNAc...) asparagine). 2 residues coordinate Cu cation: H75 and H77. The N-linked (GlcNAc...) asparagine glycan is linked to N86. C87 and C162 are oxidised to a cystine. H93 contacts Cu cation. Residue N98 is glycosylated (N-linked (GlcNAc...) asparagine). Position 153 (H153) interacts with Cu cation. N156, N164, N176, N181, and N192 each carry an N-linked (GlcNAc...) asparagine glycan. The span at 176–201 (NTTMSNSSSSSSQSAVNTSSSMASTA) shows a compositional bias: low complexity. Positions 176–204 (NTTMSNSSSSSSQSAVNTSSSMASTAPQG) are disordered. N205 is lipidated: GPI-anchor amidated asparagine. The propeptide at 206–228 (GAERAVVNGLLAAGVVGVIAALI) is removed in mature form.

The protein belongs to the Cu-Zn superoxide dismutase family. In terms of assembly, monomer. It depends on Cu cation as a cofactor. In terms of processing, the GPI-anchor is attached to the protein in the endoplasmic reticulum and serves to target the protein to the cell surface. There, the glucosamine-inositol phospholipid moiety is cleaved off and the GPI-modified mannoprotein is covalently attached via its lipidless GPI glycan remnant to the 1,6-beta-glucan of the outer cell wall layer.

The protein localises to the secreted. Its subcellular location is the cell wall. It localises to the membrane. The enzyme catalyses 2 superoxide + 2 H(+) = H2O2 + O2. With respect to regulation, secreted in a disulfide-oxidized form and apo-pools of secreted SOD5 can readily capture extracellular copper for rapid induction of enzyme activity. In terms of biological role, superoxide dismutases serve to convert damaging superoxide radicals, a key form of ROS, to less damaging hydrogen peroxide that can be converted into water by catalase action. Degrades host-derived reactive oxygen species to escape innate immune surveillance. Involved in the occurrence of miconazole-tolerant persisters in biofilms. Persisters are cells that survive high doses of an antimicrobial agent. The unusual attributes of SOD5-like fungal proteins, including the absence of zinc and an open active site that readily captures extracellular copper, make these SODs well suited to meet challenges in zinc and copper availability at the host-pathogen interface. This Candida albicans (strain SC5314 / ATCC MYA-2876) (Yeast) protein is Cell surface Cu-only superoxide dismutase 5 (SOD5).